A 355-amino-acid polypeptide reads, in one-letter code: Protein RecA (355 aa).

67–74 (GPESSGKT) contacts ATP. The segment at 336–355 (NSAASDYEDNENEEMNNEEF) is disordered. A compositionally biased stretch (acidic residues) spans 341–355 (DYEDNENEEMNNEEF).

This sequence belongs to the RecA family.

It localises to the cytoplasm. Its function is as follows. Can catalyze the hydrolysis of ATP in the presence of single-stranded DNA, the ATP-dependent uptake of single-stranded DNA by duplex DNA, and the ATP-dependent hybridization of homologous single-stranded DNAs. It interacts with LexA causing its activation and leading to its autocatalytic cleavage. This Photorhabdus laumondii subsp. laumondii (strain DSM 15139 / CIP 105565 / TT01) (Photorhabdus luminescens subsp. laumondii) protein is Protein RecA.